The following is a 350-amino-acid chain: Histidinol-phosphate aminotransferase 1 (350 aa).

Lys-211 bears the N6-(pyridoxal phosphate)lysine mark.

Belongs to the class-II pyridoxal-phosphate-dependent aminotransferase family. Histidinol-phosphate aminotransferase subfamily. Homodimer. Pyridoxal 5'-phosphate is required as a cofactor.

It carries out the reaction L-histidinol phosphate + 2-oxoglutarate = 3-(imidazol-4-yl)-2-oxopropyl phosphate + L-glutamate. It functions in the pathway amino-acid biosynthesis; L-histidine biosynthesis; L-histidine from 5-phospho-alpha-D-ribose 1-diphosphate: step 7/9. In Trichormus variabilis (strain ATCC 29413 / PCC 7937) (Anabaena variabilis), this protein is Histidinol-phosphate aminotransferase 1.